The chain runs to 341 residues: Dehydration-responsive element-binding protein 2C (341 aa).

The short motif at 8–48 (RKRKSRGTRDVAEILRQWREYNEQIEAESCIDGGGPKSIRK) is the Nuclear localization signal element. The interval 36–63 (SCIDGGGPKSIRKPPPKGSRKGCMKGKG) is disordered. A compositionally biased stretch (basic residues) spans 45 to 59 (SIRKPPPKGSRKGCM). The segment at residues 71 to 128 (DYRGVRQRRWGKWVAEIREPDGGARLWLGTFSSSYEAALAYDEAAKAIYGQSARLNLP) is a DNA-binding region (AP2/ERF).

The protein belongs to the AP2/ERF transcription factor family. ERF subfamily.

It localises to the nucleus. Its function is as follows. Transcriptional activator that binds specifically to the DNA sequence 5'-[AG]CCGAC-3'. Binding to the C-repeat/DRE element mediates high salinity- and abscisic acid-inducible transcription. The protein is Dehydration-responsive element-binding protein 2C (DREB2C) of Arabidopsis thaliana (Mouse-ear cress).